The chain runs to 160 residues: S-ribosylhomocysteine lyase (160 aa).

Positions 57, 61, and 127 each coordinate Fe cation.

This sequence belongs to the LuxS family. In terms of assembly, homodimer. Requires Fe cation as cofactor.

It carries out the reaction S-(5-deoxy-D-ribos-5-yl)-L-homocysteine = (S)-4,5-dihydroxypentane-2,3-dione + L-homocysteine. Functionally, involved in the synthesis of autoinducer 2 (AI-2) which is secreted by bacteria and is used to communicate both the cell density and the metabolic potential of the environment. The regulation of gene expression in response to changes in cell density is called quorum sensing. Catalyzes the transformation of S-ribosylhomocysteine (RHC) to homocysteine (HC) and 4,5-dihydroxy-2,3-pentadione (DPD). The protein is S-ribosylhomocysteine lyase of Streptococcus gordonii (strain Challis / ATCC 35105 / BCRC 15272 / CH1 / DL1 / V288).